The primary structure comprises 469 residues: MKDVEDIHRPMLNSLQSTSAKMKKIVLSVNAGSSSVKISAYSALFGQAPIQLAEAQISGLTAPPPTLRYTRHGEKVINDEEVKDQKVSTQADAFDILVKALIDDNGVPEISSKEDIAYICHRIVHGGDFVRPKLISDETYHNLEKLNDLAPLHNSTSLVIVHRCMSDMPKTTFNIACFDSQFHHTIPEHIRTYPINQDIARNNHLRKYGFHGISYAFITRATAEFLGKKVEDVNIIALHLGSGASACAIKGGKSLDNSMGLTPLAGLPGATRSGSVDPSLVFHYASDVGKLSPASTKDLHISRAEEILNKQSGWKALTGTTNFGTITAALDPSSSDTTSHLSPEEVAKMRLAFDIFVERICAYIGSYYVSLQGQVDALVFAGGIGEKSDRLRAAVIEQVSCLGFGPVDKEANETRVKEELDDSHDVIEIAPPNSKKGGKDGREHRVLVCKTDEQFEMARACAEDGEFWR.

Asn-30 contacts Mg(2+). Residue Lys-37 participates in ATP binding. A substrate-binding site is contributed by Arg-122. Asp-179 functions as the Proton donor/acceptor in the catalytic mechanism. An ATP-binding site is contributed by 239–243 (HLGSG). Glu-453 contributes to the Mg(2+) binding site.

Belongs to the acetokinase family. Requires Mg(2+) as cofactor.

It carries out the reaction acetate + ATP = acetyl phosphate + ADP. It functions in the pathway metabolic intermediate biosynthesis; acetyl-CoA biosynthesis; acetyl-CoA from acetate: step 1/2. The sequence is that of Probable acetate kinase from Neurospora crassa (strain ATCC 24698 / 74-OR23-1A / CBS 708.71 / DSM 1257 / FGSC 987).